We begin with the raw amino-acid sequence, 476 residues long: Cysteine--tRNA ligase (476 aa).

Residue cysteine 29 participates in Zn(2+) binding. The 'HIGH' region signature appears at 31–41 (PTVYDYTHLGH). 3 residues coordinate Zn(2+): cysteine 209, histidine 234, and glutamate 238. A 'KMSKS' region motif is present at residues 266–270 (KMSKS). Lysine 269 contacts ATP.

The protein belongs to the class-I aminoacyl-tRNA synthetase family. The cofactor is Zn(2+).

It localises to the cytoplasm. It catalyses the reaction tRNA(Cys) + L-cysteine + ATP = L-cysteinyl-tRNA(Cys) + AMP + diphosphate. This Thermococcus onnurineus (strain NA1) protein is Cysteine--tRNA ligase.